Reading from the N-terminus, the 208-residue chain is MRKTLTALMLSLPLLTPHMAFADESSVLKAKLTEIATLKAKFEQTVTDINNKQIQKGSGIFALAYPNQFYWHLTAPDESLIVADGTDVWIYNPFAEEVSVMDLNQAISASPIALLVHRDEETWSQYSVTSDNGCFNIKPKSIDAGVESVKVCFDDKTLTEMVLQDQQGNVSQFTLSEQTAIDDAERAMFKFTVPDDVDIDDQRLNAIN.

The first 22 residues, 1–22 (MRKTLTALMLSLPLLTPHMAFA), serve as a signal peptide directing secretion.

This sequence belongs to the LolA family. As to quaternary structure, monomer.

The protein resides in the periplasm. In terms of biological role, participates in the translocation of lipoproteins from the inner membrane to the outer membrane. Only forms a complex with a lipoprotein if the residue after the N-terminal Cys is not an aspartate (The Asp acts as a targeting signal to indicate that the lipoprotein should stay in the inner membrane). In Shewanella woodyi (strain ATCC 51908 / MS32), this protein is Outer-membrane lipoprotein carrier protein.